Reading from the N-terminus, the 309-residue chain is Taste receptor type 2 member 43 (309 aa).

M1 is a topological domain (extracellular). The helical transmembrane segment at 2-22 threads the bilayer; that stretch reads ITFLPIIFSSLVVVTFVIGNF. At 23–46 the chain is on the cytoplasmic side; that stretch reads ANGFIALVNSIEWFKRQKISFADQ. The chain crosses the membrane as a helical span at residues 47-67; that stretch reads ILTALAVSRVGLLWVLLLNWY. The Extracellular segment spans residues 68 to 86; sequence LTVLNPAFNSVEVRTTAYN. Residues 87 to 107 traverse the membrane as a helical segment; the sequence is IWAVINHFSNWLATSLSIFYL. Topologically, residues 108–126 are cytoplasmic; that stretch reads LKIANFSNFIFLHLKRRVK. Residues 127–147 traverse the membrane as a helical segment; that stretch reads SVILVMLLGPLLFLACHLFMI. Residues 148–178 lie on the Extracellular side of the membrane; sequence NMNEIVRTKEFDGNMTWKIKLKSAMYFSNMT. Residues N161 and N176 are each glycosylated (N-linked (GlcNAc...) asparagine). A helical membrane pass occupies residues 179 to 199; the sequence is VTMVANLVPFTLTLLSFLLLI. Over 200–229 the chain is Cytoplasmic; sequence CSLCKHLKKMQLHGKGSQDPSTKVHIKALQ. A helical transmembrane segment spans residues 230-250; the sequence is TVISFLLLCAIYFLSIMISVW. Residues 251–259 are Extracellular-facing; that stretch reads SFGSLENKP. Residues 260 to 280 form a helical membrane-spanning segment; it reads VFMFCKAIRFSYPSIHPFILI. Topologically, residues 281 to 309 are cytoplasmic; sequence WGNKKLKQTFLSVFWQMRYWVKGEKTSSP.

The protein belongs to the G-protein coupled receptor T2R family.

The protein localises to the membrane. The protein resides in the cell projection. It localises to the cilium membrane. In terms of biological role, gustducin-coupled receptor immplicated in the perception of bitter compounds in the oral cavity and the gastrointestinal tract. Signals through PLCB2 and the calcium-regulated cation channel TRPM5. Activated by the sulfonyl amide sweeteners saccharin and acesulfame K. In airway epithelial cells, binding of bitter compounds increases the intracellular calcium ion concentration and stimulates ciliary beat frequency. May act as chemosensory receptors in airway epithelial cells to detect and eliminate potential noxious agents from the airways. The sequence is that of Taste receptor type 2 member 43 (TAS2R43) from Pan paniscus (Pygmy chimpanzee).